A 501-amino-acid polypeptide reads, in one-letter code: V-type proton ATPase subunit B 2 (501 aa).

Arg-392 contributes to the ATP binding site.

This sequence belongs to the ATPase alpha/beta chains family. V-ATPase is a heteromultimeric enzyme made up of two complexes: the ATP-hydrolytic V1 complex and the proton translocation V0 complex. The V1 complex consists of three catalytic AB heterodimers that form a heterohexamer, three peripheral stalks each consisting of EG heterodimers, one central rotor including subunits D and F, and the regulatory subunits C and H. The proton translocation complex V0 consists of the proton transport subunit a, a ring of proteolipid subunits c9c'', rotary subunit d, subunits e and f, and the accessory subunits vah-19/Ac45 and vah-20/PRR. As to expression, predominantly expressed in male and hermaphrodite testis (at protein level).

The protein localises to the cytoplasm. Functionally, non-catalytic subunit of the V1 complex of vacuolar(H+)-ATPase (V-ATPase), a multisubunit enzyme composed of a peripheral complex (V1) that hydrolyzes ATP and a membrane integral complex (V0) that translocates protons. V-ATPase is responsible for acidifying and maintaining the pH of intracellular compartments and in some cell types, is targeted to the plasma membrane, where it is responsible for acidifying the extracellular environment. In neurons, required for necrotic cell death probably by promoting intracellular acidification. Required for spermatogenesis where it regulates the fibrous body-membranous organelle (FBMO) morphology in spermatocytes and the acidification of FBMO-derived secretory membranous organelles (MOs) as spermatids mature. This chain is V-type proton ATPase subunit B 2, found in Caenorhabditis elegans.